The sequence spans 174 residues: Ferredoxin-2, mitochondrial (174 aa).

The N-terminal 43 residues, 1–43, are a transit peptide targeting the mitochondrion; it reads MAASMARGVSARVLLRAAGGSWGPRAGHAAVTSRTFGTTGERR. The disordered stretch occupies residues 26-52; it reads AGHAAVTSRTFGTTGERRAGEEAADSP. The 2Fe-2S ferredoxin-type domain maps to 59-161; that stretch reads VNVVFVDRSG…GVEFALPKIT (103 aa). [2Fe-2S] cluster contacts are provided by C96, C102, C105, and C142.

This sequence belongs to the adrenodoxin/putidaredoxin family. In terms of assembly, component of the mitochondrial core iron-sulfur cluster (ISC) complex composed of NFS1, LYRM4, NDUFAB1, ISCU, FXN, and FDX2; this complex is a heterohexamer containing two copies of each monomer. Form a heterodimer complex with NFS1. Interacts (in both their reduced and oxidized states) with the cysteine desulfurase (NFS1:LYRM4) complex; this interaction stimulates cysteine desulfurase activity, and serves as a reductant for Fe-S cluster assembly. Requires [2Fe-2S] cluster as cofactor.

It localises to the mitochondrion. It is found in the mitochondrion matrix. Its function is as follows. Electron donor, of the core iron-sulfur cluster (ISC) assembly complex, that acts to reduce the persulfide into sulfide during [2Fe-2S] clusters assembly on the scaffolding protein ISCU. The core iron-sulfur cluster (ISC) assembly complex is involved in the de novo synthesis of a [2Fe-2S] cluster, the first step of the mitochondrial iron-sulfur protein biogenesis. This process is initiated by the cysteine desulfurase complex (NFS1:LYRM4:NDUFAB1) that produces persulfide which is delivered on the scaffold protein ISCU in a FXN-dependent manner. Then this complex is stabilized by FDX2 which provides reducing equivalents to accomplish the [2Fe-2S] cluster assembly. Finally, the [2Fe-2S] cluster is transferred from ISCU to chaperone proteins, including HSCB, HSPA9 and GLRX5. Essential for coenzyme Q biosynthesis: together with FDXR, transfers the electrons required for the hydroxylation reaction performed by COQ6. The protein is Ferredoxin-2, mitochondrial of Mus musculus (Mouse).